The sequence spans 75 residues: uncharacterized protein (75 aa).

It localises to the plastid. The protein resides in the chloroplast. This is an uncharacterized protein from Calycanthus floridus var. glaucus (Eastern sweetshrub).